We begin with the raw amino-acid sequence, 474 residues long: Trigger factor (474 aa).

The PPIase FKBP-type domain occupies 174–261; sequence GDIAVVSFKG…LKDLKEKELP (88 aa). The interval 435-474 is disordered; sequence VKEKTTKTSKATKTSKTTKATKTASKTTKTTKTQNKKEKK. Residues 442-467 are compositionally biased toward low complexity; sequence TSKATKTSKTTKATKTASKTTKTTKT.

This sequence belongs to the FKBP-type PPIase family. Tig subfamily.

The protein resides in the cytoplasm. It carries out the reaction [protein]-peptidylproline (omega=180) = [protein]-peptidylproline (omega=0). Its function is as follows. Involved in protein export. Acts as a chaperone by maintaining the newly synthesized protein in an open conformation. Functions as a peptidyl-prolyl cis-trans isomerase. This Prochlorococcus marinus (strain AS9601) protein is Trigger factor.